The chain runs to 889 residues: Cytoplasmic aconitate hydratase (889 aa).

Residues Gln86 and 205–207 (DSH) each bind substrate. Cys437, Cys503, and Cys506 together coordinate [4Fe-4S] cluster. Substrate is bound by residues Arg536, Arg541, Arg699, and 779–780 (SR).

This sequence belongs to the aconitase/IPM isomerase family. In terms of assembly, interacts (when associated with the 4Fe-4S) with FBXL5. Interacts with frataxin(81-210). [4Fe-4S] cluster is required as a cofactor.

Its subcellular location is the cytoplasm. It is found in the cytosol. The enzyme catalyses citrate = D-threo-isocitrate. Functionally, bifunctional iron sensor that switches between 2 activities depending on iron availability. Iron deprivation, promotes its mRNA binding activity through which it regulates the expression of genes involved in iron uptake, sequestration and utilization. Binds to iron-responsive elements (IRES) in the untranslated region of target mRNAs preventing for instance the translation of ferritin and aminolevulinic acid synthase and stabilizing the transferrin receptor mRNA. In terms of biological role, conversely, when cellular iron levels are high, binds a 4Fe-4S cluster which precludes RNA binding activity and promotes the aconitase activity, the isomerization of citrate to isocitrate via cis-aconitate. This Mus musculus (Mouse) protein is Cytoplasmic aconitate hydratase (Aco1).